Consider the following 574-residue polypeptide: Serine carboxypeptidase ctsa-3.1 (574 aa).

Positions 1 to 19 are cleaved as a signal peptide; sequence MCRTLLGVAFLVVTVLSQG. N48 and N163 each carry an N-linked (GlcNAc...) asparagine glycan. The active site involves S172. N241, N408, N414, and N426 each carry an N-linked (GlcNAc...) asparagine glycan. Catalysis depends on residues D441 and H507. An N-linked (GlcNAc...) asparagine glycan is attached at N534.

The protein belongs to the peptidase S10 family.

In Caenorhabditis elegans, this protein is Serine carboxypeptidase ctsa-3.1.